We begin with the raw amino-acid sequence, 98 residues long: Large ribosomal subunit protein uL23 (98 aa).

Belongs to the universal ribosomal protein uL23 family. Part of the 50S ribosomal subunit. Contacts protein L29, and trigger factor when it is bound to the ribosome.

One of the early assembly proteins it binds 23S rRNA. One of the proteins that surrounds the polypeptide exit tunnel on the outside of the ribosome. Forms the main docking site for trigger factor binding to the ribosome. This Jannaschia sp. (strain CCS1) protein is Large ribosomal subunit protein uL23.